We begin with the raw amino-acid sequence, 635 residues long: Threonine--tRNA ligase (635 aa).

Residues 1 to 61 (MITVRLPDGS…EQDSDLSIIT (61 aa)) form the TGS domain. The tract at residues 242 to 533 (DHRKLGRALD…LIENHAGALP (292 aa)) is catalytic. Residues C333, H384, and H510 each contribute to the Zn(2+) site.

Belongs to the class-II aminoacyl-tRNA synthetase family. As to quaternary structure, homodimer. The cofactor is Zn(2+).

Its subcellular location is the cytoplasm. The catalysed reaction is tRNA(Thr) + L-threonine + ATP = L-threonyl-tRNA(Thr) + AMP + diphosphate + H(+). Functionally, catalyzes the attachment of threonine to tRNA(Thr) in a two-step reaction: L-threonine is first activated by ATP to form Thr-AMP and then transferred to the acceptor end of tRNA(Thr). Also edits incorrectly charged L-seryl-tRNA(Thr). The protein is Threonine--tRNA ligase of Herminiimonas arsenicoxydans.